The sequence spans 109 residues: Preprofallaxidin-8 (109 aa).

Residues 1-22 form the signal peptide; the sequence is MASLKKSLFLVLFLGLLSLSIC. Positions 23–46 are excised as a propeptide; sequence EEQKRENEEDAEDENHEEESEEKR. Positions 27–46 are disordered; sequence RENEEDAEDENHEEESEEKR. Acidic residues predominate over residues 30–42; that stretch reads EEDAEDENHEEES. At L62 the chain carries Leucine amide. A propeptide spanning residues 66–70 is cleaved from the precursor; it reads SEEKR. M75 is subject to Methionine amide. The propeptide occupies 79-83; sequence SEEKR. Position 88 is a methionine amide (M88). Propeptides lie at residues 92–96 and A108; that span reads SEEKR.

It belongs to the frog skin active peptide (FSAP) family. Brevinin subfamily. Expressed by the skin glands.

The protein resides in the secreted. In terms of biological role, fallaxidin-2.1 shows no antibacterial activity against Gram-positive or Gram-negative bacteria. Does not inhibit the formation of NO by neuronal nitric oxide synthase. Has no effect on splenocyte proliferation or smooth muscle contraction. Its function is as follows. Fallaxidin-3.2 shows antibacterial activity against the Gram-positive bacteria E.faecalis (MIC=100 uM) and L.lactis (MIC=500 uM). No antibacterial activity against the Gram-positive bacteria B.cereus, L.innocua, M.luteus, S.epidermidis, S.uberis and S.aureus, or the Gram-negative bacteria E.cloacae and E.coli. In Litoria fallax (Eastern dwarf tree frog), this protein is Preprofallaxidin-8.